A 221-amino-acid chain; its full sequence is D-glycero-alpha-D-manno-heptose 1-phosphate guanylyltransferase (221 aa).

It belongs to the D-alpha-D-heptose-1-P guanylyltransferase family.

The catalysed reaction is D-glycero-alpha-D-manno-heptose 1-phosphate + GTP + H(+) = GDP-D-glycero-alpha-D-manno-heptose + diphosphate. It functions in the pathway nucleotide-sugar biosynthesis; GDP-D-glycero-alpha-D-manno-heptose biosynthesis; GDP-D-glycero-alpha-D-manno-heptose from D-glycero-alpha-D-manno-heptose 7-phosphate: step 3/3. The protein operates within capsule biogenesis; capsule polysaccharide biosynthesis. Catalyzes the GDP transfer from GTP to D-glycero-alpha-D-manno-heptose 1-phosphate, yielding GDP-D-alpha-D-heptose. Is able to use ATP, CTP or UTP as substrate in the presence of pyrophosphatase, but at a significantly slower rate. Can also form GDP-alpha-D-mannose from alpha-D-mannose 1-phosphate and GTP. In Campylobacter jejuni subsp. jejuni serotype O:2 (strain ATCC 700819 / NCTC 11168), this protein is D-glycero-alpha-D-manno-heptose 1-phosphate guanylyltransferase.